Here is a 208-residue protein sequence, read N- to C-terminus: MIVIIDYDTGNTKSISKALDFIGLQNKISSDKTEIAQADGVILPGVGAYPEAMQELTRRGLDKTLKEIATAGKPILGVCLGMQLLLESSNEHSYTKGLGLIPGHVEMLPDESEFAVPHMGWNQLQIKRTTPLTQNIAGEYVYYVHSYYANCPEAYIIATSGYSIDIPGMINNGNIYGAQFHPEKSGQIGLEILKGFKEVIRSCKSSQQ.

Residues 1–206 (MIVIIDYDTG…KEVIRSCKSS (206 aa)) enclose the Glutamine amidotransferase type-1 domain. The active-site Nucleophile is the C79. Residues H181 and E183 contribute to the active site.

In terms of assembly, heterodimer of HisH and HisF.

The protein resides in the cytoplasm. It catalyses the reaction 5-[(5-phospho-1-deoxy-D-ribulos-1-ylimino)methylamino]-1-(5-phospho-beta-D-ribosyl)imidazole-4-carboxamide + L-glutamine = D-erythro-1-(imidazol-4-yl)glycerol 3-phosphate + 5-amino-1-(5-phospho-beta-D-ribosyl)imidazole-4-carboxamide + L-glutamate + H(+). It carries out the reaction L-glutamine + H2O = L-glutamate + NH4(+). It functions in the pathway amino-acid biosynthesis; L-histidine biosynthesis; L-histidine from 5-phospho-alpha-D-ribose 1-diphosphate: step 5/9. Functionally, IGPS catalyzes the conversion of PRFAR and glutamine to IGP, AICAR and glutamate. The HisH subunit catalyzes the hydrolysis of glutamine to glutamate and ammonia as part of the synthesis of IGP and AICAR. The resulting ammonia molecule is channeled to the active site of HisF. This Listeria monocytogenes serotype 4b (strain CLIP80459) protein is Imidazole glycerol phosphate synthase subunit HisH.